The following is a 233-amino-acid chain: C-type lectin domain-containing protein 87 (233 aa).

A signal peptide spans 1-20 (MRFFRFLVFPVIAGLSSVLA). Asn-26 carries N-linked (GlcNAc...) asparagine glycosylation. Ser-32 carries an O-linked (Xyl...) (chondroitin sulfate) serine glycan. N-linked (GlcNAc...) asparagine glycosylation occurs at Asn-81. The region spanning 93-223 (FADSCYWIET…CTYLLYSICE (131 aa)) is the C-type lectin domain. Intrachain disulfides connect Cys-114-Cys-222 and Cys-193-Cys-214. A glycan (N-linked (GlcNAc...) asparagine) is linked at Asn-225.

This is C-type lectin domain-containing protein 87 from Caenorhabditis briggsae.